Here is a 308-residue protein sequence, read N- to C-terminus: Protoheme IX farnesyltransferase (308 aa).

8 helical membrane-spanning segments follow: residues 20–40 (LLAY…VTAI), 50–70 (AIHP…AAGA), 102–122 (NALA…WCAT), 124–144 (LLAG…YTLW), 149–169 (TSQN…IGWS), 170–190 (AITG…FFWT), 227–249 (LIYT…WLYG), and 288–308 (YLAV…PTLH).

It belongs to the UbiA prenyltransferase family. Protoheme IX farnesyltransferase subfamily.

It localises to the cell membrane. It carries out the reaction heme b + (2E,6E)-farnesyl diphosphate + H2O = Fe(II)-heme o + diphosphate. It participates in porphyrin-containing compound metabolism; heme O biosynthesis; heme O from protoheme: step 1/1. Its function is as follows. Converts heme B (protoheme IX) to heme O by substitution of the vinyl group on carbon 2 of heme B porphyrin ring with a hydroxyethyl farnesyl side group. The chain is Protoheme IX farnesyltransferase from Mycobacterium tuberculosis (strain ATCC 25618 / H37Rv).